The following is a 299-amino-acid chain: Sodium/potassium-transporting ATPase subunit beta-2 (299 aa).

Residues 1-36 (MAALTQKKTCSQMMEEWKEFMWNPRTREFMGRTGSS) are Cytoplasmic-facing. The chain crosses the membrane as a helical; Signal-anchor for type II membrane protein span at residues 37-57 (WALILLFYVVFYAFLTAVFSL). Residues 58-299 (SLWVMLQTID…VIFTMKIDRL (242 aa)) lie on the Extracellular side of the membrane. N-linked (GlcNAc...) asparagine glycans are attached at residues Asn101 and Asn119. 2 disulfides stabilise this stretch: Cys130–Cys152 and Cys162–Cys178. 4 N-linked (GlcNAc...) asparagine glycosylation sites follow: Asn199, Asn226, Asn247, and Asn259. Cys206 and Cys270 are oxidised to a cystine.

Belongs to the X(+)/potassium ATPases subunit beta family. As to quaternary structure, the sodium/potassium-transporting ATPase is composed of a catalytic alpha subunit, an auxiliary non-catalytic beta subunit and an additional regulatory subunit. In terms of tissue distribution, expressed at a high level in bladder epithelial cells and eye and at a trace level in kidney; it is not detectable in significant amounts in the stomach, colon and small intestine.

It localises to the cell membrane. Its function is as follows. This is the non-catalytic component of the active enzyme, which catalyzes the hydrolysis of ATP coupled with the exchange of Na(+) and K(+) ions across the plasma membrane. The exact function of this glycoprotein is not known. Some specific sequence of the beta subunit can modulate the activation of the Na,K-pump by extracellular potassium ions. In Rhinella marina (Cane toad), this protein is Sodium/potassium-transporting ATPase subunit beta-2.